A 299-amino-acid chain; its full sequence is Putative pyrroline-5-carboxylate reductase 4 (299 aa).

The protein belongs to the pyrroline-5-carboxylate reductase family.

It catalyses the reaction L-proline + NADP(+) = (S)-1-pyrroline-5-carboxylate + NADPH + 2 H(+). The catalysed reaction is L-proline + NAD(+) = (S)-1-pyrroline-5-carboxylate + NADH + 2 H(+). The protein operates within amino-acid biosynthesis; L-proline biosynthesis; L-proline from L-glutamate 5-semialdehyde: step 1/1. In Caenorhabditis elegans, this protein is Putative pyrroline-5-carboxylate reductase 4.